Consider the following 502-residue polypeptide: Glycerol kinase (502 aa).

Residue T14 coordinates ADP. Positions 14 and 15 each coordinate ATP. T14 contacts sn-glycerol 3-phosphate. Residue R18 coordinates ADP. The sn-glycerol 3-phosphate site is built by R84, E85, Y136, and D245. Residues R84, E85, Y136, D245, and Q246 each coordinate glycerol. The ADP site is built by T267 and G314. The ATP site is built by T267, G314, Q318, and G415. 2 residues coordinate ADP: G415 and N419.

It belongs to the FGGY kinase family.

The catalysed reaction is glycerol + ATP = sn-glycerol 3-phosphate + ADP + H(+). Its pathway is polyol metabolism; glycerol degradation via glycerol kinase pathway; sn-glycerol 3-phosphate from glycerol: step 1/1. With respect to regulation, inhibited by fructose 1,6-bisphosphate (FBP). Key enzyme in the regulation of glycerol uptake and metabolism. Catalyzes the phosphorylation of glycerol to yield sn-glycerol 3-phosphate. The chain is Glycerol kinase from Acaryochloris marina (strain MBIC 11017).